A 130-amino-acid chain; its full sequence is Small ribosomal subunit protein uS9 (130 aa).

The disordered stretch occupies residues 108 to 130; that stretch reads SREVERKKVGLRKARKRPQYSKR. Positions 116 to 130 are enriched in basic residues; the sequence is VGLRKARKRPQYSKR.

The protein belongs to the universal ribosomal protein uS9 family.

The chain is Small ribosomal subunit protein uS9 from Cellvibrio japonicus (strain Ueda107) (Pseudomonas fluorescens subsp. cellulosa).